The sequence spans 610 residues: L-galactono-1,4-lactone dehydrogenase, mitochondrial (610 aa).

The transit peptide at 1–35 directs the protein to the mitochondrion; the sequence is MLRSLLLRRSVGHSLGTLSPSSSTIRSSFSPHRTL. The disordered stretch occupies residues 17–61; the sequence is TLSPSSSTIRSSFSPHRTLCTTGQTLTPPPPPPPRPPPPPPATAS. Low complexity predominate over residues 19–30; it reads SPSSSTIRSSFS. Residues 36–101 constitute a propeptide, removed in mature form; sequence CTTGQTLTPP…AKHKKAQIFR (66 aa). The segment covering 43-58 has biased composition (pro residues); the sequence is TPPPPPPPRPPPPPPA. Residues 68–84 form a helical membrane-spanning segment; that stretch reads YAGYAALAIFSGVATYF. The 136-residue stretch at 123 to 258 folds into the FAD-binding PCMH-type domain; the sequence is TRNFNQPENL…TPAKGTIELS (136 aa).

Requires FAD as cofactor.

It is found in the mitochondrion membrane. The catalysed reaction is L-galactono-1,4-lactone + 4 Fe(III)-[cytochrome c] = L-dehydroascorbate + 4 Fe(II)-[cytochrome c] + 5 H(+). It carries out the reaction L-gulono-1,4-lactone + 2 Fe(III)-[cytochrome c] = L-ascorbate + 2 Fe(II)-[cytochrome c] + 3 H(+). It functions in the pathway cofactor biosynthesis; L-ascorbate biosynthesis. Its function is as follows. Involved in the biosynthesis of ascorbate. Catalyzes the final step of ascorbate biosynthesis. Uses L-galactono-1,4-lactone and L-gulono-1,4-lactone as substrates, but not D-galactono-1,4-lactone, D-gulono-1,4-lactone, L-mannono-1,4-lactone or D-galactonic acid. Also active with phenazine methosulfate and 1,4-benzoquinone as electron acceptors. Involved in the regulation of the accumulation of the mitochondrial respiratory complex I. Structural part of one of the plant-specific mitochondrial complex I assembly intermediates, lacking the whole distal (PD) module. Prevents the binding of the plant specific P1 protein (CPN60/HSP60), responsible for the linkage of the proximal (PP) to the distal (PD) module. The protein is L-galactono-1,4-lactone dehydrogenase, mitochondrial of Arabidopsis thaliana (Mouse-ear cress).